We begin with the raw amino-acid sequence, 81 residues long: Photosystem I iron-sulfur center (81 aa).

2 consecutive 4Fe-4S ferredoxin-type domains span residues S2–W31 and I39–Y68. The [4Fe-4S] cluster site is built by C11, C14, C17, C21, C48, C51, C54, and C58.

In terms of assembly, the cyanobacterial PSI reaction center is composed of one copy each of PsaA,B,C,D,E,F,I,J,K,L,M and X, and forms trimeric complexes. It depends on [4Fe-4S] cluster as a cofactor.

The protein resides in the cellular thylakoid membrane. The enzyme catalyses reduced [plastocyanin] + hnu + oxidized [2Fe-2S]-[ferredoxin] = oxidized [plastocyanin] + reduced [2Fe-2S]-[ferredoxin]. In terms of biological role, apoprotein for the two 4Fe-4S centers FA and FB of photosystem I (PSI); essential for photochemical activity. FB is the terminal electron acceptor of PSI, donating electrons to ferredoxin. The C-terminus interacts with PsaA/B/D and helps assemble the protein into the PSI complex. Required for binding of PsaD and PsaE to PSI. PSI is a plastocyanin/cytochrome c6-ferredoxin oxidoreductase, converting photonic excitation into a charge separation, which transfers an electron from the donor P700 chlorophyll pair to the spectroscopically characterized acceptors A0, A1, FX, FA and FB in turn. This is Photosystem I iron-sulfur center from Synechococcus elongatus (strain ATCC 33912 / PCC 7942 / FACHB-805) (Anacystis nidulans R2).